The primary structure comprises 286 residues: Fructose-bisphosphate aldolase (286 aa).

Ser50 contacts D-glyceraldehyde 3-phosphate. Asp85 acts as the Proton donor in catalysis. His86, Asp107, Glu137, and His181 together coordinate Zn(2+). Gly182 contributes to the dihydroxyacetone phosphate binding site. A Zn(2+)-binding site is contributed by His209. Residues 210 to 212 and 231 to 234 contribute to the dihydroxyacetone phosphate site; these read GGT and NVNT.

The protein belongs to the class II fructose-bisphosphate aldolase family. The cofactor is Zn(2+).

The catalysed reaction is beta-D-fructose 1,6-bisphosphate = D-glyceraldehyde 3-phosphate + dihydroxyacetone phosphate. The protein operates within carbohydrate degradation; glycolysis; D-glyceraldehyde 3-phosphate and glycerone phosphate from D-glucose: step 4/4. Its function is as follows. Catalyzes the aldol condensation of dihydroxyacetone phosphate (DHAP or glycerone-phosphate) with glyceraldehyde 3-phosphate (G3P) to form fructose 1,6-bisphosphate (FBP) in gluconeogenesis and the reverse reaction in glycolysis. The protein is Fructose-bisphosphate aldolase (fba) of Staphylococcus epidermidis (strain ATCC 35984 / DSM 28319 / BCRC 17069 / CCUG 31568 / BM 3577 / RP62A).